Here is a 218-residue protein sequence, read N- to C-terminus: Peptide methionine sulfoxide reductase MsrA (218 aa).

The active site involves Cys-57.

It belongs to the MsrA Met sulfoxide reductase family.

The catalysed reaction is L-methionyl-[protein] + [thioredoxin]-disulfide + H2O = L-methionyl-(S)-S-oxide-[protein] + [thioredoxin]-dithiol. It carries out the reaction [thioredoxin]-disulfide + L-methionine + H2O = L-methionine (S)-S-oxide + [thioredoxin]-dithiol. Its function is as follows. Has an important function as a repair enzyme for proteins that have been inactivated by oxidation. Catalyzes the reversible oxidation-reduction of methionine sulfoxide in proteins to methionine. The polypeptide is Peptide methionine sulfoxide reductase MsrA (Brucella melitensis biotype 2 (strain ATCC 23457)).